The sequence spans 156 residues: Extracellular giant hemoglobin major globin subunit A1 (156 aa).

An N-terminal signal peptide occupies residues 1-16 (MKVLIIFACLVVMASA). In terms of domain architecture, Globin spans 17-156 (VCNRLEQILV…YERIASGISG (140 aa)). Cysteines 18 and 146 form a disulfide. Cys79 provides a ligand contact to hydrogen sulfide. Residue His110 coordinates heme b.

The protein belongs to the globin family. The 400 kDa hemoglobin consists of a spherical 24-mer arranged as a double layer of dome-shaped dodecamers. Each dodecamer is composed of the 3-fold trimer of the tetramer A1-A2-B1-B2 having one intra-tetramer (A1-B2) disulfide bond and one inter-tetramer (B1-B2) disulfide bond per tetramer.

It is found in the secreted. In terms of biological role, the extracellular giant hemoglobin is able to bind and transport oxygen and hydrosulfide simultaneously and reversibly at two different sites. This Oligobrachia mashikoi (Beard worm) protein is Extracellular giant hemoglobin major globin subunit A1 (ghbA1).